We begin with the raw amino-acid sequence, 141 residues long: Transcriptional regulator MraZ (141 aa).

SpoVT-AbrB domains lie at 5-47 (TFNI…KPQD) and 76-119 (ANFV…DKKL).

This sequence belongs to the MraZ family. Homooctamer. Forms a ring.

Its subcellular location is the cytoplasm. The protein localises to the nucleoid. The chain is Transcriptional regulator MraZ from Mycoplasma pneumoniae (strain ATCC 29342 / M129 / Subtype 1) (Mycoplasmoides pneumoniae).